An 80-amino-acid chain; its full sequence is FXYD domain-containing ion transport regulator 7 (80 aa).

Over 1 to 22 (MATPTQSPTNVPEETDPFFYDY) the chain is Extracellular. 3 O-linked (GlcNAc) threonine glycosylation sites follow: Thr3, Thr5, and Thr9. The chain crosses the membrane as a helical span at residues 23–45 (ATVQTVGMTLATIMFVLGIIIIL). Residues 46-80 (SKKVKCRKADSRSESPTCKSCKSELPSSAPGGGGV) are Cytoplasmic-facing. The disordered stretch occupies residues 55–80 (DSRSESPTCKSCKSELPSSAPGGGGV). Ser73 carries the post-translational modification Phosphoserine.

This sequence belongs to the FXYD family. In terms of assembly, regulatory subunit of the sodium/potassium-transporting ATPase which is composed of a catalytic alpha subunit, a non-catalytic beta subunit and an additional regulatory subunit. The regulatory subunit, a member of the FXYD protein family, modulates the enzymatic activity in a tissue- and isoform-specific way by changing affinities of the Na+/K+-ATPase toward Na(+), K(+) or ATP. O-glycosylated; required for stabilization and translocation to the plasma membrane.

The protein localises to the cell membrane. Functionally, associates with and regulates the activity of the sodium/potassium-transporting ATPase (NKA) which catalyzes the hydrolysis of ATP coupled with the exchange of Na(+) and K(+) ions across the plasma membrane. Reduces the apparent affinity for external K(+), an effect that depends on the presence of external Na(+) and voltage. Increases the apparent affinity for intracellular Na(+). This Mus musculus (Mouse) protein is FXYD domain-containing ion transport regulator 7 (Fxyd7).